The primary structure comprises 891 residues: MSGVNDIRSAFLNYFAANGHEIVPSSPLVPRNDPTLMFTNAGMVQFKNVFTGVEKRPYQRATTSQKCVRAGGKHNDLDNVGYTARHHTFFEMLGNFSFGDYFKDRAIELAWKLVTEEFGLPKDKLIATVYIDDDEAFGLWKKIAGLPDSRIIRIAGADNFWQMGDTGPCGPCSEIFYDHGDKIPGGPPGSPDEDGDRFVEIWNLVFMQYEKLPDGSRLNLPKPSIDTGAGLERVAAVLQGKHDNYDIDLFVALIRAAADLTGADPHGPMKASLRVIADHLRATSFLIADGVLPSNEGRGYVLRRIMRRAMRHAQLLGAKEPLMWRLVGVLVREMGEAFPELQRARPLIEETLRLEETRFRKTLERGLSILDEKSASLKKGDMFDGETAFTLYDTYGFPLDLTQDALRARGIGVDIASFTDAMEQQKAKARASWSGSGEAATETIWFPLREKLGATEFLGYETEIAEGAVAALVKDGKEADSLKAGESGAIVLNQTPFYGESGGQVGDTGILTGDGVRVRVTDTQKKAGDLFVHLGTVEQGTLTPGMALALEVDRARRGAIRANHSATHLLHEALRQVLGDHIAQRGSLVAPERLRFDFVHNKPISADELRRIEDIANDVVLENGEVTTRLMAVDDAREAGARALFGEKYGDEVRVVSMGSTGRQGAASNALGWSVELCGGTHVKRTGDIGLISVTGESAVASGVRRIEALTGHHARHHANDAIQLAKTAAGELRTTLDDMPPRITSLMEERKKLERELSEARKKLAMGGGAASASSGAAGVRDVGGIKLMARSVEGIEIKDLKNLADQGKKQLGSGVVALVATSGDGKASIVVGVTPDLVTRFSAVDLVRKASEVLGGKGGGGKPDMAQAGGPDGAKAGAALDAIAAAMGG.

Positions 564, 568, 678, and 682 each coordinate Zn(2+).

Belongs to the class-II aminoacyl-tRNA synthetase family. It depends on Zn(2+) as a cofactor.

Its subcellular location is the cytoplasm. The enzyme catalyses tRNA(Ala) + L-alanine + ATP = L-alanyl-tRNA(Ala) + AMP + diphosphate. Its function is as follows. Catalyzes the attachment of alanine to tRNA(Ala) in a two-step reaction: alanine is first activated by ATP to form Ala-AMP and then transferred to the acceptor end of tRNA(Ala). Also edits incorrectly charged Ser-tRNA(Ala) and Gly-tRNA(Ala) via its editing domain. The polypeptide is Alanine--tRNA ligase (Nitrobacter hamburgensis (strain DSM 10229 / NCIMB 13809 / X14)).